We begin with the raw amino-acid sequence, 488 residues long: MKYKDLRDFIRQLEAKGELVRISQPIDTDLEMTEIADRTLRAGGPALLFENPKNHDMPVLANLFGTPERVAMGMGQESVEALREVGKLLAYLKEPEPPKGLKDLWEKLPVFKQVLNMPAKVLKKAPCQEVVLTGDDVDLSKIPVQRCWPGDAAPLVTWGLSVTKGPHKKRQNLGIYRQQVIGKNKLIMRWLSHRGGALDFREWCQTHPGEPYPVSVALGADPATILGAVTPVPDTLSEYAFAGLLRGDKTEVVKSISNDLQVPASAEIVLEGYIAQDETAPEGPYGDHTGYYNEVDDFPVFTVTHITHRKDPIYHSTYTGRPPDEPAILGVALNEVFVPILQKQFPEIVDFYLPPEGCSYRMAVVTMKKQYPGHAKRVMMGVWSFLRQFMYTKFVIVCDDDVNARDWNDVIWAITTRMDPARDTVMIENTPIDYLDFASPVSGLGSKMGMDATNKMPGETDREWGVPIVMDEGVKKRVDDIWDSLGIM.

Mn(2+) is bound at residue Asn172. Prenylated FMN-binding positions include 175-177 (IYR), 189-191 (RWL), and 194-195 (RG). Residue Glu238 coordinates Mn(2+). Residue Asp287 is the Proton donor of the active site.

This sequence belongs to the UbiD family. As to quaternary structure, homohexamer. It depends on prenylated FMN as a cofactor. Requires Mn(2+) as cofactor.

It is found in the cell membrane. It catalyses the reaction a 4-hydroxy-3-(all-trans-polyprenyl)benzoate + H(+) = a 2-(all-trans-polyprenyl)phenol + CO2. It functions in the pathway cofactor biosynthesis; ubiquinone biosynthesis. Catalyzes the decarboxylation of 3-octaprenyl-4-hydroxy benzoate to 2-octaprenylphenol, an intermediate step in ubiquinone biosynthesis. In Alteromonas mediterranea (strain DSM 17117 / CIP 110805 / LMG 28347 / Deep ecotype), this protein is 3-octaprenyl-4-hydroxybenzoate carboxy-lyase.